Reading from the N-terminus, the 217-residue chain is Translation initiation factor IF-3 (217 aa).

The disordered stretch occupies residues 185–217 (YNLPETETTRIREENREKQKEKENTSKEGNKDA). Basic and acidic residues predominate over residues 191 to 217 (ETTRIREENREKQKEKENTSKEGNKDA).

This sequence belongs to the IF-3 family. In terms of assembly, monomer.

Its subcellular location is the cytoplasm. IF-3 binds to the 30S ribosomal subunit and shifts the equilibrium between 70S ribosomes and their 50S and 30S subunits in favor of the free subunits, thus enhancing the availability of 30S subunits on which protein synthesis initiation begins. This Methylacidiphilum infernorum (isolate V4) (Methylokorus infernorum (strain V4)) protein is Translation initiation factor IF-3.